A 60-amino-acid polypeptide reads, in one-letter code: UPF0434 protein NMCC_0628 (60 aa).

Belongs to the UPF0434 family.

This is UPF0434 protein NMCC_0628 from Neisseria meningitidis serogroup C (strain 053442).